The sequence spans 861 residues: Translation initiation factor IF-2 (861 aa).

Residues 107-272 (AQKQQDIQRA…QRKKKSKVVQ (166 aa)) form a disordered region. Positions 115–128 (RAAEEAAAKERETE) are enriched in basic and acidic residues. Polar residues-rich tracts occupy residues 148–158 (SVQQEAANMDT) and 169–180 (VDESVSATTAGG). The span at 210-228 (NKEDSEVRREPADAEDLKR) shows a compositional bias: basic and acidic residues. Positions 260 to 269 (RARQRKKKSK) are enriched in basic residues. The region spanning 362-531 (SRAPVVSVMG…LLQSEMLELT (170 aa)) is the tr-type G domain. A G1 region spans residues 371–378 (GHVDHGKT). 371–378 (GHVDHGKT) is a binding site for GTP. Positions 396 to 400 (GITQH) are G2. Positions 417-420 (DTPG) are G3. GTP is bound by residues 417–421 (DTPGH) and 471–474 (NKMD). The segment at 471-474 (NKMD) is G4. Residues 507–509 (SAH) form a G5 region.

It belongs to the TRAFAC class translation factor GTPase superfamily. Classic translation factor GTPase family. IF-2 subfamily.

Its subcellular location is the cytoplasm. One of the essential components for the initiation of protein synthesis. Protects formylmethionyl-tRNA from spontaneous hydrolysis and promotes its binding to the 30S ribosomal subunits. Also involved in the hydrolysis of GTP during the formation of the 70S ribosomal complex. The protein is Translation initiation factor IF-2 of Hahella chejuensis (strain KCTC 2396).